The chain runs to 254 residues: Thiazole synthase (254 aa).

Catalysis depends on K95, which acts as the Schiff-base intermediate with DXP. 1-deoxy-D-xylulose 5-phosphate is bound by residues G156, 182–183 (AG), and 204–205 (NT).

It belongs to the ThiG family. Homotetramer. Forms heterodimers with either ThiH or ThiS.

The protein localises to the cytoplasm. The enzyme catalyses [ThiS sulfur-carrier protein]-C-terminal-Gly-aminoethanethioate + 2-iminoacetate + 1-deoxy-D-xylulose 5-phosphate = [ThiS sulfur-carrier protein]-C-terminal Gly-Gly + 2-[(2R,5Z)-2-carboxy-4-methylthiazol-5(2H)-ylidene]ethyl phosphate + 2 H2O + H(+). Its pathway is cofactor biosynthesis; thiamine diphosphate biosynthesis. Catalyzes the rearrangement of 1-deoxy-D-xylulose 5-phosphate (DXP) to produce the thiazole phosphate moiety of thiamine. Sulfur is provided by the thiocarboxylate moiety of the carrier protein ThiS. In vitro, sulfur can be provided by H(2)S. The polypeptide is Thiazole synthase (Shewanella baltica (strain OS223)).